Reading from the N-terminus, the 419-residue chain is MRFVDYVSIEVVAGKGGDGIISFRREAHVDKGGPDGGDGGWGGSIYFVGDSGMNTLLPFYQTKKIFGYNGENGRPKRQTGANGKDIFIKVPLGTQVFLKKSLICDIILEKKYLIAKGGRGGLGNFHFRNSKNKAPRISENGELGQNFYLDLQLKVMADIGLVGKPNAGKSTLLSLISNSKPKIANYEFTTLAPQLGVVKIYENSFVTADLPGLIQGASSGKGMGIIFLKHIERCRAIVHVIDFGSDNKNPIKDFIEIKSELEKFNKKLLDLNQIVIANKCDLPNFQFNLANFKRKFPKIKIIKSSLISAKQNEINIIKEKMFGLLGEKQKKLEIQEINTSKIEFNLKAPFLIKSRNNGFFEITGELIQKIIQKIPLNSQENILRFNAKVKKIGLWDELIKKGIKPGDLVRIYEFEFHWN.

Positions M1–M156 constitute an Obg domain. One can recognise an OBG-type G domain in the interval A157–I334. GTP-binding positions include G163–S170, F188–A192, D209–G212, N278–D281, and N315–I317. The Mg(2+) site is built by S170 and T190. The OCT domain occupies I342–N419.

Belongs to the TRAFAC class OBG-HflX-like GTPase superfamily. OBG GTPase family. As to quaternary structure, monomer. The cofactor is Mg(2+).

The protein resides in the cytoplasm. An essential GTPase which binds GTP, GDP and possibly (p)ppGpp with moderate affinity, with high nucleotide exchange rates and a fairly low GTP hydrolysis rate. Plays a role in control of the cell cycle, stress response, ribosome biogenesis and in those bacteria that undergo differentiation, in morphogenesis control. The protein is GTPase Obg of Mesomycoplasma hyopneumoniae (strain J / ATCC 25934 / NCTC 10110) (Mycoplasma hyopneumoniae).